Consider the following 180-residue polypeptide: Large ribosomal subunit protein uL5 (180 aa).

Belongs to the universal ribosomal protein uL5 family. In terms of assembly, part of the 50S ribosomal subunit; part of the 5S rRNA/L5/L18/L25 subcomplex. Contacts the 5S rRNA and the P site tRNA. Forms a bridge to the 30S subunit in the 70S ribosome.

This is one of the proteins that bind and probably mediate the attachment of the 5S RNA into the large ribosomal subunit, where it forms part of the central protuberance. In the 70S ribosome it contacts protein S13 of the 30S subunit (bridge B1b), connecting the 2 subunits; this bridge is implicated in subunit movement. Contacts the P site tRNA; the 5S rRNA and some of its associated proteins might help stabilize positioning of ribosome-bound tRNAs. The polypeptide is Large ribosomal subunit protein uL5 (Xanthomonas axonopodis pv. citri (strain 306)).